The primary structure comprises 442 residues: Histidinol dehydrogenase (442 aa).

Residues tyrosine 142, glutamine 204, and asparagine 227 each contribute to the NAD(+) site. The substrate site is built by serine 250, glutamine 272, and histidine 275. Residues glutamine 272 and histidine 275 each contribute to the Zn(2+) site. Residues glutamate 340 and histidine 341 each act as proton acceptor in the active site. The substrate site is built by histidine 341, aspartate 374, glutamate 428, and histidine 433. Residue aspartate 374 coordinates Zn(2+). Position 433 (histidine 433) interacts with Zn(2+).

The protein belongs to the histidinol dehydrogenase family. It depends on Zn(2+) as a cofactor.

The enzyme catalyses L-histidinol + 2 NAD(+) + H2O = L-histidine + 2 NADH + 3 H(+). Its pathway is amino-acid biosynthesis; L-histidine biosynthesis; L-histidine from 5-phospho-alpha-D-ribose 1-diphosphate: step 9/9. Functionally, catalyzes the sequential NAD-dependent oxidations of L-histidinol to L-histidinaldehyde and then to L-histidine. The polypeptide is Histidinol dehydrogenase (Prochlorococcus marinus (strain MIT 9313)).